The chain runs to 3649 residues: N-(5-amino-5-carboxypentanoyl)-L-cysteinyl-D-valine synthase (3649 aa).

Residues 401–861 (SRDRAYVTYT…LAGHLESQGH (461 aa)) are domain 1 (adipate-activating). Carrier domains lie at 783 to 860 (APLL…ESQG), 1859 to 1936 (APVS…QAAA), and 2909 to 2984 (APRD…LSGL). 3 positions are modified to O-(pantetheine 4'-phosphoryl)serine: S820, S1896, and S2944. The domain 2 (cysteine-activating) stretch occupies residues 1014 to 1937 (HHIILDGWSL…QAEHIQAAAL (924 aa)). Positions 2079–2985 (HHSCFDGWSW…FVDNVLSGLA (907 aa)) are domain 3 (valine-activating). The For thioesterase activity role is filled by S3502.

It belongs to the ATP-dependent AMP-binding enzyme family. Pantetheine 4'-phosphate serves as cofactor.

It carries out the reaction L-2-aminoadipate + L-valine + L-cysteine + 3 ATP + H2O = N-[(5S)-5-amino-5-carboxypentanoyl]-L-cysteinyl-D-valine + 3 AMP + 3 diphosphate + 3 H(+). Its pathway is antibiotic biosynthesis; penicillin G biosynthesis; penicillin G from L-alpha-aminoadipate and L-cysteine and L-valine: step 1/3. Functionally, each of the constituent amino acids of the tripeptide acv are activated as aminoacyl-adenylates with peptide bonds formed through the participation of amino acid thioester intermediates. The chain is N-(5-amino-5-carboxypentanoyl)-L-cysteinyl-D-valine synthase (pcbAB) from Amycolatopsis lactamdurans (Nocardia lactamdurans).